The chain runs to 155 residues: Large ribosomal subunit protein uL30 (155 aa).

It belongs to the universal ribosomal protein uL30 family. Part of the 50S ribosomal subunit.

The polypeptide is Large ribosomal subunit protein uL30 (Nanoarchaeum equitans (strain Kin4-M)).